Consider the following 1050-residue polypeptide: MTSKFDPLKFEEEVLKYWDDNNIYKKLKEINEKNHKKFLFIDGPPYPSSPIPHIGTVWNKTIKDCILRYERLMGYSVKDQPGYDTHGLPIEVETEKRLGIKSKAEIIEKVGVDNFISKCKEFAVNNSKSLTQNFRNLGIFMDWENPYFTFNNDYISNSWAVIKKAYERGLLYKGVHVLHWCSRCETTLADYEVSEYRDLEDPSIYVKFRVKGEPNRYLVIWTTTPWTLPANVFVMINKDFEYADVRVGDEILVIAKDRVKELMKEARIKEYKILRVYKGEELLGLEYEHPLADIVSAQSKINNHHKVLDGGEAVTLQEGTGLVHSAPGHGDVDFEIGKKYDMPVVMLVNDKGEFTQDSGKYAGKYVRSASEEIISDLKQRSALLHASKIVHRYPVCWRCKTPLILRAIEQWFIAVSKLKDHLMGEIDRVRWIPDWGKTRIGNMVKEVRDWVISRQRFWGTPLPIWVCSNCQNIIVVGGVDELSKISINQVPQDLHRPWIDSVVVRCEKCGGEARRISDVADVWFDSGVAFFASLGQDWRKRWSELGPVDLVLEGHDQLRGWFFSLLRTGVILMDKAPYEAVLVHGFMLDEQGREMHKSSGNYVEPSQVVSKYGRDTLRLWLLRNTTWEDAKFSWKSLDMTRRDLNIIWNVYVFANTYMSLDEFKYSKYSYNDIKDYLKLEDIWLLSRYYRMLKEVIEAMKEYKVHELANKVTAFIIDDISRFYLRVTRKRAWNEANDPDKIAMYYVLYHVLKGSLILLSTVIPFTAEKIYLDFVQERLESISMEKIPEIKEEFINSEIEEAFEVAKEIIDAGLNARAKAGIKLRWPLKEVYVFLVSDKDRRSIEKITDVLSSLLNSKSIIIEGIDGYKRFSKIRATPNTGSIGPTFKRLSVKVAEYIQNNSDKVAQDIVSKGYHEFNVDSENLRLDISHVNLVEEVEKGYVSARFSKGVVLLKQEMSKEEEEEGIIRDLIRRIQFMRKQLSLNVNEYILLSIRAPDDKVDLIKKWEQYIKNETRAKELRIGDVSGDLIQDWDVEEETYTIGVSKADVSVS.

The 'HIGH' region signature appears at 45-56 (PYPSSPIPHIGT). A 'KMSKS' region motif is present at residues 594–598 (EMHKS). Lys597 lines the ATP pocket.

It belongs to the class-I aminoacyl-tRNA synthetase family. IleS type 2 subfamily. As to quaternary structure, monomer. The cofactor is Zn(2+).

The protein resides in the cytoplasm. The enzyme catalyses tRNA(Ile) + L-isoleucine + ATP = L-isoleucyl-tRNA(Ile) + AMP + diphosphate. Catalyzes the attachment of isoleucine to tRNA(Ile). As IleRS can inadvertently accommodate and process structurally similar amino acids such as valine, to avoid such errors it has two additional distinct tRNA(Ile)-dependent editing activities. One activity is designated as 'pretransfer' editing and involves the hydrolysis of activated Val-AMP. The other activity is designated 'posttransfer' editing and involves deacylation of mischarged Val-tRNA(Ile). The sequence is that of Isoleucine--tRNA ligase from Sulfolobus acidocaldarius (strain ATCC 33909 / DSM 639 / JCM 8929 / NBRC 15157 / NCIMB 11770).